The sequence spans 225 residues: Insulin-induced gene 2 protein (225 aa).

Residues 1-28 (MAEGETESPGPKKCGPYISSVTSQSVNL) are Cytoplasmic-facing. The helical transmembrane segment at 29 to 51 (MIRGVVLFFIGVFLALVLNLLQI) threads the bilayer. At 52-70 (QRNVTLFPPDVIASIFSSA) the chain is on the lumenal side. The chain crosses the membrane as a helical span at residues 71–88 (WWVPPCCGTASAVIGLLY). The Cytoplasmic portion of the chain corresponds to 89–103 (PCIDRHLGEPHKFKR). A helical membrane pass occupies residues 104-126 (EWSSVMRCVAVFVGINHASAKVD). Over 127–129 (FDN) the chain is Lumenal. Residues 130–148 (NIQLSLTLAALSIGLWWTF) traverse the membrane as a helical segment. Topologically, residues 149-153 (DRSRS) are cytoplasmic. S151 is subject to Phosphoserine; by PCK1. The helical transmembrane segment at 154–175 (GFGLGVGIAFLATVVTQLLVYN) threads the bilayer. The Lumenal portion of the chain corresponds to 176–189 (GVYQYTSPDFLYVR). A helical transmembrane segment spans residues 190 to 207 (SWLPCIFFAGGITMGNIG). Over 208-225 (RQLAMYECKVIAEKSHQE) the chain is Cytoplasmic. C215 is modified (cysteine sulfenic acid (-SOH); alternate). C215 participates in a covalent cross-link: Glycyl cysteine thioester (Cys-Gly) (interchain with G-Cter in ubiquitin); alternate. Residues 219–225 (AEKSHQE) carry the KxHxx motif.

This sequence belongs to the INSIG family. As to quaternary structure, interacts with SCAP; interaction is direct and only takes place in the presence of sterols; it prevents interaction between SCAP and the coat protein complex II (COPII). Associates with the SCAP-SREBP complex (composed of SCAP and SREBF1/SREBP1 or SREBF2/SREBP2); association is mediated via its interaction with SCAP and only takes place in the presence of sterols. Interacts with RNF139. Interacts with RNF145. Phosphorylation at Ser-151 by PCK1 reduces binding to oxysterol, disrupting the interaction between INSIG2 and SCAP, thereby promoting nuclear translocation of SREBP proteins (SREBF1/SREBP1 or SREBF2/SREBP2) and subsequent transcription of downstream lipogenesis-related genes. In terms of processing, polyubiquitinated by AMFR/gp78 at Cys-215 in some tissues such as adipose tissues, undifferentiated myoblasts and liver, leading to its degradation. In differentiated myotubes, Cys-215 oxidation prevents ubiquitination at the same site, resulting in protein stabilization. Post-translationally, oxidized at Cys-215 in differentiated myotubes, preventing ubiquitination at the same site, and resulting in protein stabilization.

It is found in the endoplasmic reticulum membrane. Its function is as follows. Oxysterol-binding protein that mediates feedback control of cholesterol synthesis by controlling both endoplasmic reticulum to Golgi transport of SCAP and degradation of HMGCR. Acts as a negative regulator of cholesterol biosynthesis by mediating the retention of the SCAP-SREBP complex in the endoplasmic reticulum, thereby blocking the processing of sterol regulatory element-binding proteins (SREBPs) SREBF1/SREBP1 and SREBF2/SREBP2. Binds oxysterol, including 22-hydroxycholesterol, 24-hydroxycholesterol, 25-hydroxycholesterol and 27-hydroxycholesterol, regulating interaction with SCAP and retention of the SCAP-SREBP complex in the endoplasmic reticulum. In presence of oxysterol, interacts with SCAP, retaining the SCAP-SREBP complex in the endoplasmic reticulum, thereby preventing SCAP from escorting SREBF1/SREBP1 and SREBF2/SREBP2 to the Golgi. Sterol deprivation or phosphorylation by PCK1 reduce oxysterol-binding, disrupting the interaction between INSIG2 and SCAP, thereby promoting Golgi transport of the SCAP-SREBP complex, followed by processing and nuclear translocation of SREBF1/SREBP1 and SREBF2/SREBP2. Also regulates cholesterol synthesis by regulating degradation of HMGCR: initiates the sterol-mediated ubiquitin-mediated endoplasmic reticulum-associated degradation (ERAD) of HMGCR via recruitment of the reductase to the ubiquitin ligase RNF139. The chain is Insulin-induced gene 2 protein from Homo sapiens (Human).